A 268-amino-acid polypeptide reads, in one-letter code: MTSSEKNSTGLAGKTCLVTGGAGGLGKAVTAAFLDAGANVVICDINAKRIESTLAELRTRGGNLTAVTADITDHDQVLSLFDDIAGRFGTLDVLVNNAAVMDRFDPVGDIELDLWDNVLAVNLTAPLQLSKFAVRSMLSKPEPAGCIINIASGAATAGWLAGTAYTASKHGLVGLTKSTAAFYGPKGIRCNALIMGVMVGTHMHEAFLDGCHKEGRQKVEEIFSGHRPQTCKVDDVAGICLSLASGPGWGTVNGALIAVDNGWTSVVG.

Positions 18, 70, 97, 131, 165, and 169 each coordinate NADP(+). The active-site Proton acceptor is Tyr-165. Lys-169 serves as the catalytic Lowers pKa of active site Tyr.

The protein belongs to the short-chain dehydrogenases/reductases (SDR) family.

It functions in the pathway secondary metabolite biosynthesis; terpenoid biosynthesis. Its function is as follows. Short chain dehydrogenase/reductase; part of the gene cluster that mediates the biosynthesis of the diterpenoid pyrones higginsianins A and B. The first step of the pathway is the synthesis of the alpha-pyrone moiety by the polyketide synthase dpchA via condensation of one acetyl-CoA starter unit with 3 malonyl-CoA units and 2 methylations. The alpha-pyrone is then combined with geranylgeranyl pyrophosphate (GGPP) formed by the GGPP synthase dpchD through the action of the prenyltransferase dpchC to yield a linear alpha-pyrone diterpenoid. Subsequent steps in the diterpenoid pyrone biosynthetic pathway involve the decalin core formation, which is initiated by the epoxidation of the C10-C11 olefin by the FAD-dependent oxidoreductase dpchE, and is followed by a cyclization cascade catalyzed by the terpene cyclase dpchB. The short chain dehydrogenase/reductase dpchG then oxidizes the 8S hydroxy group to a ketone and the short chain dehydrogenase/reductase dpchH reduces the ketone to the 8R hydroxy group to yield higginsianin B. Finally, the FAD-dependent oxidoreductase dpchF converts higginsianin B into higginsianin A. The polypeptide is Short chain dehydrogenase/reductase dpchG (Colletotrichum higginsianum (strain IMI 349063) (Crucifer anthracnose fungus)).